Consider the following 87-residue polypeptide: MKIFGFFGKRASAPMARERLQVLLAHERASLGKSDLVAILREEIIAVIAKHIQVDSEKVNVKMDRDEKVSTLEIDVEIPLQAGGRAA.

The protein belongs to the MinE family.

Functionally, prevents the cell division inhibition by proteins MinC and MinD at internal division sites while permitting inhibition at polar sites. This ensures cell division at the proper site by restricting the formation of a division septum at the midpoint of the long axis of the cell. This chain is Cell division topological specificity factor, found in Chelativorans sp. (strain BNC1).